The chain runs to 358 residues: Phosphate acyltransferase (358 aa).

It belongs to the PlsX family. As to quaternary structure, homodimer. Probably interacts with PlsY.

It is found in the cytoplasm. It carries out the reaction a fatty acyl-[ACP] + phosphate = an acyl phosphate + holo-[ACP]. Its pathway is lipid metabolism; phospholipid metabolism. In terms of biological role, catalyzes the reversible formation of acyl-phosphate (acyl-PO(4)) from acyl-[acyl-carrier-protein] (acyl-ACP). This enzyme utilizes acyl-ACP as fatty acyl donor, but not acyl-CoA. In Escherichia fergusonii (strain ATCC 35469 / DSM 13698 / CCUG 18766 / IAM 14443 / JCM 21226 / LMG 7866 / NBRC 102419 / NCTC 12128 / CDC 0568-73), this protein is Phosphate acyltransferase.